The following is a 149-amino-acid chain: 3-dehydroquinate dehydratase (149 aa).

Catalysis depends on Tyr22, which acts as the Proton acceptor. Substrate contacts are provided by Asn73, His79, and Asp86. The active-site Proton donor is the His99. Residues 100 to 101 and Arg110 contribute to the substrate site; that span reads LS.

It belongs to the type-II 3-dehydroquinase family. Homododecamer.

It carries out the reaction 3-dehydroquinate = 3-dehydroshikimate + H2O. Its pathway is metabolic intermediate biosynthesis; chorismate biosynthesis; chorismate from D-erythrose 4-phosphate and phosphoenolpyruvate: step 3/7. Its function is as follows. Catalyzes a trans-dehydration via an enolate intermediate. The protein is 3-dehydroquinate dehydratase of Prochlorococcus marinus (strain SARG / CCMP1375 / SS120).